We begin with the raw amino-acid sequence, 497 residues long: Guanosine-5'-triphosphate,3'-diphosphate pyrophosphatase (497 aa).

It belongs to the GppA/Ppx family. GppA subfamily.

It catalyses the reaction guanosine 3'-diphosphate 5'-triphosphate + H2O = guanosine 3',5'-bis(diphosphate) + phosphate + H(+). Its pathway is purine metabolism; ppGpp biosynthesis; ppGpp from GTP: step 2/2. Catalyzes the conversion of pppGpp to ppGpp. Guanosine pentaphosphate (pppGpp) is a cytoplasmic signaling molecule which together with ppGpp controls the 'stringent response', an adaptive process that allows bacteria to respond to amino acid starvation, resulting in the coordinated regulation of numerous cellular activities. This chain is Guanosine-5'-triphosphate,3'-diphosphate pyrophosphatase, found in Aliivibrio fischeri (strain ATCC 700601 / ES114) (Vibrio fischeri).